Consider the following 356-residue polypeptide: MIRNSGRILFNSLKNSNVKLINRNVIINSNIRLFSTSTNNTIKESVEKKAETISNKDNIASPSSKSIDVSDLAGNADYNFVFERIKTCDKENYINSLLISDPIARRVAYAIRAFNIETVANDHSPKSEKISRLRLSFWKDAINNIYNGKVYDQPLTRVLAQVIKEKKLTKTWFIKILNRREKDNQQVQIKDMEELEQYADDIHSSLMLLTLEGLGVKGNHDVEHCASHLGKAIGIMVLIRGTVYHLASRKTYIPVSLTTKYGINVESLYRGDPQIEKLQNAIYEMASCAKLHLDKAKQFRGKIPHPATEAFLSVSVVEDFLERLRKADFNIFEFPNTQQHPLLLIKLYKNKFFKQF.

The N-terminal 41 residues, 1–41 (MIRNSGRILFNSLKNSNVKLINRNVIINSNIRLFSTSTNNT), are a transit peptide targeting the mitochondrion.

It belongs to the NDUFAF6 family.

The protein localises to the mitochondrion inner membrane. Functionally, involved in the assembly of mitochondrial NADH:ubiquinone oxidoreductase complex (complex I) at early stages. This Dictyostelium discoideum (Social amoeba) protein is NADH dehydrogenase (ubiquinone) complex I, assembly factor 6 homolog.